Reading from the N-terminus, the 142-residue chain is Hemoglobin subunit beta-C (142 aa).

The Globin domain occupies 1 to 142 (MPNKALITGF…VASALAHRYH (142 aa)). His-59 and His-88 together coordinate heme b.

Belongs to the globin family. Heterotetramer of two alpha chains and two beta chains. In terms of tissue distribution, red blood cells.

Its function is as follows. Involved in oxygen transport from the lung to the various peripheral tissues. In Capra hircus (Goat), this protein is Hemoglobin subunit beta-C (HBBC).